The chain runs to 400 residues: Glycine betaine/proline betaine transport system ATP-binding protein ProV (400 aa).

The ABC transporter domain maps to 29-265; it reads LSKEQILEKT…PANDYVRTFF (237 aa). 61–68 contributes to the ATP binding site; the sequence is GLSGSGKS. CBS domains are found at residues 282–341 and 343–400; these read RTPN…GLDA and LIDA…VNNG.

It belongs to the ABC transporter superfamily. In terms of assembly, the complex is composed of two ATP-binding proteins (ProV), two transmembrane proteins (ProW) and a solute-binding protein (ProX).

The protein localises to the cell inner membrane. Functionally, part of the ProU ABC transporter complex involved in glycine betaine and proline betaine uptake. Probably responsible for energy coupling to the transport system. This chain is Glycine betaine/proline betaine transport system ATP-binding protein ProV, found in Escherichia coli (strain K12).